The following is a 537-amino-acid chain: O-phosphoserine--tRNA(Cys) ligase (537 aa).

Substrate is bound by residues 186 to 188, 231 to 233, 273 to 274, and N317; these read HMT, SAS, and YY.

Belongs to the class-II aminoacyl-tRNA synthetase family. O-phosphoseryl-tRNA(Cys) synthetase subfamily. As to quaternary structure, homotetramer. Interacts with SepCysS.

It carries out the reaction tRNA(Cys) + O-phospho-L-serine + ATP = O-phospho-L-seryl-tRNA(Cys) + AMP + diphosphate. Catalyzes the attachment of O-phosphoserine (Sep) to tRNA(Cys). The polypeptide is O-phosphoserine--tRNA(Cys) ligase (Methanococcus maripaludis (strain C5 / ATCC BAA-1333)).